The chain runs to 89 residues: Small ribosomal subunit protein uS15 (89 aa).

The protein belongs to the universal ribosomal protein uS15 family. Part of the 30S ribosomal subunit. Forms a bridge to the 50S subunit in the 70S ribosome, contacting the 23S rRNA.

Its function is as follows. One of the primary rRNA binding proteins, it binds directly to 16S rRNA where it helps nucleate assembly of the platform of the 30S subunit by binding and bridging several RNA helices of the 16S rRNA. Forms an intersubunit bridge (bridge B4) with the 23S rRNA of the 50S subunit in the ribosome. This Caulobacter sp. (strain K31) protein is Small ribosomal subunit protein uS15.